The sequence spans 140 residues: MTIIRKYHIAIAWTIATSAMLISLIFSEWMKLPPCDLCWYQRMAMYPLVLILGIGMYRKDSNVSIYAFPFACIGLIISVYQITIQAFPTSEMKICSVGVSCTENYLNLFGFISIPMLSFVGFLAIIILLYINQIKRQKNK.

Residues 6–25 (KYHIAIAWTIATSAMLISLI) traverse the membrane as a helical segment. A disulfide bridge links cysteine 35 with cysteine 38. Transmembrane regions (helical) follow at residues 40-59 (YQRM…MYRK) and 66-83 (YAFP…YQIT). A disulfide bridge links cysteine 95 with cysteine 101. The chain crosses the membrane as a helical span at residues 110–134 (GFISIPMLSFVGFLAIIILLYINQI).

Belongs to the DsbB family. BdbC subfamily.

The protein resides in the cell membrane. Its function is as follows. Required for disulfide bond formation in some proteins. The sequence is that of Probable disulfide formation protein C 2 (bdbC2) from Bacillus anthracis.